The sequence spans 507 residues: MITASTSVFGGLILAFIFSLLYKNKKTRIPAEIDRVRTGGFLAHIRAFGCRLGTRVDDIRNGYNKFNKNGKPFVIQDSTFIPQVVIPPQYLGWLKEQPEKALSAETVRLEQLGLRYLVPSSDPEMVHLLTDVVCRYLTRNFQRVQERLYEELHMSTDEIMGLEATEWRQICLHEAMETILRRMISCVLIGLPWCRDEECLKSWTGFLHCMAIAGTILGAVTPWFLRPLLGLLLKPPVGYMRRRSLRYLTPIFTERWKKIEKHEKSSLTTRELPDDFVTWCIQEVRNGAAEVTMLDLLSADPTIGYWEKLVEEATTAFRTDEDWIHAGTVSKLAYTDSAIRESLRRNPFSIRNVTREVIGKDGLTLPSGTRLPQGTWITTALANIHHDARFYSNPTEYQPFRFVARDAFHTEGKEGSEKVLQPSEAILTSTIDERLLTFGYGRRACPGRWFASHILKMLIAYITINYDIQPLTGPPKKVKFADFTVPSPSIKIIVRRKNLAYLRQRER.

2 consecutive transmembrane segments (helical) span residues 1–21 and 205–225; these read MITA…FSLL and GFLH…PWFL. A glycan (N-linked (GlcNAc...) asparagine) is linked at N352. C445 is a heme binding site.

The protein belongs to the cytochrome P450 family. Heme serves as cofactor.

It localises to the membrane. Its pathway is secondary metabolite biosynthesis. Functionally, cytochrome P450 monooxygenase; part of the gene cluster that mediates the biosynthesis of the indole diterpenes nodulisporic acids (NA). Nodulisporic acid A (NAA) and its chemically modified derivatives are of particular significance because of their highly potent insecticidal activity against blood-feeding arthropods and lack of observable adverse effects on mammals, in particular the tremogenicity associated with the paspaline-derived IDTs is not observed. The geranylgeranyl diphosphate (GGPP) synthase ggs1, localized outside of the cluster, is proposed to catalyze the first step in nodulisporic acid biosynthesis via conversion of farnesyl pyrophosphate and isopentyl pyrophosphate into geranylgeranyl pyrophosphate (GGPP). Condensation of indole-3-glycerol phosphate with GGPP by the prenyl transferase nodC then forms 3-geranylgeranylindole (3-GGI). Epoxidation by the FAD-dependent monooxygenase nodM leads to a single-epoxidized-GGI that is substrate of the terpene cyclase nodB for cyclization to yield emindole SB. The terminal methyl carbon, C28, of emindole SB is then oxidized by the cytochrome P450 monooxygenase nodW to produce nodulisporic acid F (NAF), the pentacyclic core of NAA. NAF is converted to nodulisporic acid E (NAE) via prenylation. This step is probably performed by one of the indole diterpene prenyltransferases nodD1 or nodD2. Several oxidation steps performed by the FAD-linked oxidoreductase nodO and one of the cytochrome P450 monooxygenase nodR, nodX or nodZ further convert NAE to nodulisporic acid D (NAD). NAD is substrate of cytochrome P450 monooxygenase nodJ to produce the precursor of nodulisporic acid C (NAC), converted to NAC by one of the indole diterpene prenyltransferases nodD1 or nodD2. The FAD-dependent monooxygenase nodY2 then oxidizes NAC to nodulisporic acid B (NAB). Finally NAB is converted to NAA by one of the cytochrome P450 monooxygenases nodR, nodX or nodZ. In Hypoxylon pulicicidum, this protein is Cytochrome P450 monooxygenase nodZ.